A 185-amino-acid polypeptide reads, in one-letter code: Photosystem I assembly protein Ycf4 (185 aa).

2 helical membrane-spanning segments follow: residues 24–44 and 66–86; these read YLIG…SISS and IIMG…WYLV.

Belongs to the Ycf4 family.

It is found in the cellular thylakoid membrane. Its function is as follows. Seems to be required for the assembly of the photosystem I complex. In Prochlorococcus marinus (strain MIT 9515), this protein is Photosystem I assembly protein Ycf4.